Consider the following 347-residue polypeptide: D-alanine--D-alanine ligase (347 aa).

An ATP-grasp domain is found at 131-333; that stretch reads KRVLESAGIA…YPELIERLVD (203 aa). 161–216 serves as a coordination point for ATP; it reads EEKLAYPVFAKPSNMGSSVGISKSENQEELRQALKLAFRYDSRVLVEQGVNAREIE. Residues Asp-287, Glu-300, and Asn-302 each contribute to the Mg(2+) site.

The protein belongs to the D-alanine--D-alanine ligase family. It depends on Mg(2+) as a cofactor. Requires Mn(2+) as cofactor.

The protein localises to the cytoplasm. The catalysed reaction is 2 D-alanine + ATP = D-alanyl-D-alanine + ADP + phosphate + H(+). It functions in the pathway cell wall biogenesis; peptidoglycan biosynthesis. Its function is as follows. Cell wall formation. In Streptococcus pneumoniae (strain P1031), this protein is D-alanine--D-alanine ligase.